The following is a 60-amino-acid chain: Small, acid-soluble spore protein H 2 (60 aa).

The disordered stretch occupies residues T38–S60.

It belongs to the SspH family.

The protein resides in the spore core. The protein is Small, acid-soluble spore protein H 2 of Geobacillus thermodenitrificans (strain NG80-2).